Here is a 573-residue protein sequence, read N- to C-terminus: 2-isopropylmalate synthase (573 aa).

The Pyruvate carboxyltransferase domain occupies 37-314 (PRWLSTDLRD…DPQIDFSNID (278 aa)). Residues aspartate 46, histidine 253, histidine 255, and asparagine 289 each coordinate Mg(2+). Residues 456–573 (NPRNPWGRIQ…VVSAVNRAAR (118 aa)) form a regulatory domain region.

This sequence belongs to the alpha-IPM synthase/homocitrate synthase family. LeuA type 2 subfamily. As to quaternary structure, homodimer. The cofactor is Mg(2+).

The protein resides in the cytoplasm. The enzyme catalyses 3-methyl-2-oxobutanoate + acetyl-CoA + H2O = (2S)-2-isopropylmalate + CoA + H(+). It functions in the pathway amino-acid biosynthesis; L-leucine biosynthesis; L-leucine from 3-methyl-2-oxobutanoate: step 1/4. Its function is as follows. Catalyzes the condensation of the acetyl group of acetyl-CoA with 3-methyl-2-oxobutanoate (2-ketoisovalerate) to form 3-carboxy-3-hydroxy-4-methylpentanoate (2-isopropylmalate). The sequence is that of 2-isopropylmalate synthase from Streptomyces avermitilis (strain ATCC 31267 / DSM 46492 / JCM 5070 / NBRC 14893 / NCIMB 12804 / NRRL 8165 / MA-4680).